Reading from the N-terminus, the 500-residue chain is ADP,ATP carrier protein 5 (500 aa).

Helical transmembrane passes span Leu-26–Leu-46, Ile-62–Tyr-82, Ile-94–Tyr-114, Tyr-149–Trp-169, Phe-184–Met-204, Ile-224–Leu-244, Leu-287–Val-307, Leu-328–Met-348, Ala-357–Phe-377, Ile-381–Gly-401, and Ser-469–Val-489.

It belongs to the ADP/ATP translocase tlc family.

Its subcellular location is the cell membrane. Functionally, provides the rickettsial cell with host ATP in exchange for rickettsial ADP. This is an obligate exchange system. This energy acquiring activity is an important component of rickettsial parasitism. This is ADP,ATP carrier protein 5 (tlcE) from Rickettsia prowazekii (strain Madrid E).